The sequence spans 210 residues: Probable glutathione peroxidase 8 (210 aa).

The chain crosses the membrane as a helical span at residues 21–40 (VLLSMTVGVGCLLLLQTQLL).

The protein belongs to the glutathione peroxidase family.

Its subcellular location is the membrane. The enzyme catalyses 2 glutathione + H2O2 = glutathione disulfide + 2 H2O. This Tetraodon nigroviridis (Spotted green pufferfish) protein is Probable glutathione peroxidase 8 (gpx8).